A 268-amino-acid polypeptide reads, in one-letter code: Speedy protein E4A (268 aa).

Disordered stretches follow at residues 1–26 (MGEG…LGFV) and 43–97 (LCSE…LDSE). The segment covering 43–52 (LCSEEQSPQP) has biased composition (polar residues). The interval 134-265 (PEHHKVFTKL…DLWVWARDRT (132 aa)) is speedy/Ringo box; Required for CDK-binding.

This sequence belongs to the Speedy/Ringo family. In terms of assembly, interacts with CDK1. Does not interact with CDK2 in vivo. Testis-specific.

It is found in the nucleus. Its function is as follows. Promotes progression through the cell cycle via binding and activation of CDK1. The polypeptide is Speedy protein E4A (Mus musculus (Mouse)).